The chain runs to 83 residues: uncharacterized protein (83 aa).

The protein resides in the plastid. It localises to the chloroplast. This is an uncharacterized protein from Pinus thunbergii (Japanese black pine).